Here is a 591-residue protein sequence, read N- to C-terminus: V-type ATP synthase alpha chain (591 aa).

ATP is bound at residue 233-240 (GPFGAGKT).

Belongs to the ATPase alpha/beta chains family.

The enzyme catalyses ATP + H2O + 4 H(+)(in) = ADP + phosphate + 5 H(+)(out). In terms of biological role, produces ATP from ADP in the presence of a proton gradient across the membrane. The V-type alpha chain is a catalytic subunit. The sequence is that of V-type ATP synthase alpha chain from Streptococcus pneumoniae serotype 19F (strain G54).